Here is a 210-residue protein sequence, read N- to C-terminus: Uracil phosphoribosyltransferase (210 aa).

5-phospho-alpha-D-ribose 1-diphosphate contacts are provided by residues arginine 78, arginine 103, and 130 to 138 (DPMLATGGT). Uracil is bound by residues isoleucine 193 and 198 to 200 (GDA). Position 199 (aspartate 199) interacts with 5-phospho-alpha-D-ribose 1-diphosphate.

This sequence belongs to the UPRTase family. The cofactor is Mg(2+).

The catalysed reaction is UMP + diphosphate = 5-phospho-alpha-D-ribose 1-diphosphate + uracil. It functions in the pathway pyrimidine metabolism; UMP biosynthesis via salvage pathway; UMP from uracil: step 1/1. Allosterically activated by GTP. Catalyzes the conversion of uracil and 5-phospho-alpha-D-ribose 1-diphosphate (PRPP) to UMP and diphosphate. This is Uracil phosphoribosyltransferase from Xanthomonas campestris pv. campestris (strain 8004).